The primary structure comprises 237 residues: Ditrans,polycis-undecaprenyl-diphosphate synthase ((2E,6E)-farnesyl-diphosphate specific) (237 aa).

D11 is a catalytic residue. D11 is a Mg(2+) binding site. Substrate contacts are provided by residues 12–15, W16, R24, H28, and 56–58; these read GNGR and SIE. The active-site Proton acceptor is N59. Substrate is bound by residues R62, R179, and 185–187; that span reads RLS. E198 is a Mg(2+) binding site.

The protein belongs to the UPP synthase family. As to quaternary structure, homodimer. Requires Mg(2+) as cofactor.

It catalyses the reaction 8 isopentenyl diphosphate + (2E,6E)-farnesyl diphosphate = di-trans,octa-cis-undecaprenyl diphosphate + 8 diphosphate. In terms of biological role, catalyzes the sequential condensation of isopentenyl diphosphate (IPP) with (2E,6E)-farnesyl diphosphate (E,E-FPP) to yield (2Z,6Z,10Z,14Z,18Z,22Z,26Z,30Z,34E,38E)-undecaprenyl diphosphate (di-trans,octa-cis-UPP). UPP is the precursor of glycosyl carrier lipid in the biosynthesis of bacterial cell wall polysaccharide components such as peptidoglycan and lipopolysaccharide. The chain is Ditrans,polycis-undecaprenyl-diphosphate synthase ((2E,6E)-farnesyl-diphosphate specific) from Coxiella burnetii (strain RSA 493 / Nine Mile phase I).